The primary structure comprises 209 residues: High frequency lysogenization protein HflD homolog (209 aa).

The stretch at 95–132 (LERKLAASKGAMNTLGNRIADLSRQLEHFELESDTLMS) forms a coiled coil.

It belongs to the HflD family.

It is found in the cytoplasm. Its subcellular location is the cell inner membrane. The polypeptide is High frequency lysogenization protein HflD homolog (Cronobacter sakazakii (strain ATCC BAA-894) (Enterobacter sakazakii)).